Here is a 369-residue protein sequence, read N- to C-terminus: Anhydro-N-acetylmuramic acid kinase (369 aa).

12-19 (GTSMDGVD) is a binding site for ATP.

It belongs to the anhydro-N-acetylmuramic acid kinase family.

It carries out the reaction 1,6-anhydro-N-acetyl-beta-muramate + ATP + H2O = N-acetyl-D-muramate 6-phosphate + ADP + H(+). It participates in amino-sugar metabolism; 1,6-anhydro-N-acetylmuramate degradation. The protein operates within cell wall biogenesis; peptidoglycan recycling. Catalyzes the specific phosphorylation of 1,6-anhydro-N-acetylmuramic acid (anhMurNAc) with the simultaneous cleavage of the 1,6-anhydro ring, generating MurNAc-6-P. Is required for the utilization of anhMurNAc either imported from the medium or derived from its own cell wall murein, and thus plays a role in cell wall recycling. The protein is Anhydro-N-acetylmuramic acid kinase of Shewanella halifaxensis (strain HAW-EB4).